A 574-amino-acid chain; its full sequence is 2-succinyl-5-enolpyruvyl-6-hydroxy-3-cyclohexene-1-carboxylate synthase (574 aa).

It belongs to the TPP enzyme family. MenD subfamily. In terms of assembly, homodimer. It depends on Mg(2+) as a cofactor. Mn(2+) serves as cofactor. The cofactor is thiamine diphosphate.

It catalyses the reaction isochorismate + 2-oxoglutarate + H(+) = 5-enolpyruvoyl-6-hydroxy-2-succinyl-cyclohex-3-ene-1-carboxylate + CO2. The protein operates within quinol/quinone metabolism; 1,4-dihydroxy-2-naphthoate biosynthesis; 1,4-dihydroxy-2-naphthoate from chorismate: step 2/7. It participates in quinol/quinone metabolism; menaquinone biosynthesis. Functionally, catalyzes the thiamine diphosphate-dependent decarboxylation of 2-oxoglutarate and the subsequent addition of the resulting succinic semialdehyde-thiamine pyrophosphate anion to isochorismate to yield 2-succinyl-5-enolpyruvyl-6-hydroxy-3-cyclohexene-1-carboxylate (SEPHCHC). This is 2-succinyl-5-enolpyruvyl-6-hydroxy-3-cyclohexene-1-carboxylate synthase from Rubrobacter xylanophilus (strain DSM 9941 / JCM 11954 / NBRC 16129 / PRD-1).